Consider the following 405-residue polypeptide: MVCRNVSRQQFRAIMIITSLLDTDLYKFSMMQVVLHHFPAAQVEYRYKCRTPGINLRPYLDEIRAEVHELCQLRFTSEELDYLRGLRFIKSDFVDFLGLFHLPERCIFIGEGEQPGEISITVKGPWLHTILFEIPVLAIVNEVYFRNTRRNPDWEEGRKRLQSKMNLVLDDPALADFRVAEYGTRRRFSKVWHEEIVSTMKARMGVHFAGTSNVLLAMRHGVLPLGTMGHEYLQACQALGPRLRDSQVFALEVWAKEYRGDLGIALSDVYGMDAFLRDFDMYFCKLFDGARHDSGDPFVWGERLLEHYRANRADPRAKTLVFSDSLTFPRAIELARQFAGRCKVSFGIGTNLTNDLGHEPLQIVMKMVRCNGQPVAKVSDAPEKTMCDDPAYLAYLRQVFQLPPA.

His230 carries the phosphohistidine; by autocatalysis modification.

This sequence belongs to the NAPRTase family. In terms of processing, transiently phosphorylated on a His residue during the reaction cycle. Phosphorylation strongly increases the affinity for substrates and increases the rate of nicotinate D-ribonucleotide production. Dephosphorylation regenerates the low-affinity form of the enzyme, leading to product release.

The catalysed reaction is nicotinate + 5-phospho-alpha-D-ribose 1-diphosphate + ATP + H2O = nicotinate beta-D-ribonucleotide + ADP + phosphate + diphosphate. The protein operates within cofactor biosynthesis; NAD(+) biosynthesis; nicotinate D-ribonucleotide from nicotinate: step 1/1. Its function is as follows. Catalyzes the synthesis of beta-nicotinate D-ribonucleotide from nicotinate and 5-phospho-D-ribose 1-phosphate at the expense of ATP. The chain is Nicotinate phosphoribosyltransferase from Bordetella bronchiseptica (strain ATCC BAA-588 / NCTC 13252 / RB50) (Alcaligenes bronchisepticus).